Consider the following 255-residue polypeptide: uncharacterized protein (255 aa).

Helical transmembrane passes span 2–22 (LLPAANVIMQLAVPGVGYGVL) and 168–188 (VASVAFLPWPLRAVAGPFNLF).

The protein resides in the cell membrane. This is an uncharacterized protein from Mycobacterium tuberculosis (strain ATCC 25618 / H37Rv).